The sequence spans 333 residues: Protein translocase subunit SecF (333 aa).

Helical transmembrane passes span 27 to 47 (AIVM…NFGI), 152 to 172 (VWTA…YIWV), 180 to 200 (LGAV…FAVL), 207 to 227 (TTVA…VVVF), 253 to 275 (TLSR…LIWG), and 285 to 307 (AMVW…IVLF).

It belongs to the SecD/SecF family. SecF subfamily. Forms a complex with SecD. Part of the essential Sec protein translocation apparatus which comprises SecA, SecYEG and auxiliary proteins SecDF-YajC and YidC.

It localises to the cell inner membrane. In terms of biological role, part of the Sec protein translocase complex. Interacts with the SecYEG preprotein conducting channel. SecDF uses the proton motive force (PMF) to complete protein translocation after the ATP-dependent function of SecA. The protein is Protein translocase subunit SecF of Rhodobacter capsulatus (strain ATCC BAA-309 / NBRC 16581 / SB1003).